A 677-amino-acid chain; its full sequence is Zinc finger and BTB domain-containing protein 5 (677 aa).

Positions 24–93 constitute a BTB domain; the sequence is CDCVIVVGNR…MYTSTLMLGE (70 aa). The segment covering 158 to 181 has biased composition (polar residues); it reads LNSSQNGEEQPAPMSSSMRSNLDQ. Disordered stretches follow at residues 158–252 and 287–312; these read LNSS…MTDN and SMAS…SFQC. S234 carries the phosphoserine modification. A Glycyl lysine isopeptide (Lys-Gly) (interchain with G-Cter in SUMO2) cross-link involves residue K239. Over residues 287 to 300 the composition is skewed to polar residues; the sequence is SMASRATQVETSFD. Glycyl lysine isopeptide (Lys-Gly) (interchain with G-Cter in SUMO2) cross-links involve residues K322 and K330. The segment at 331–387 is disordered; the sequence is SEPLSSPEPQDEVSDVTSQAEGSESVEVEGVVVSAEKIDLSPESSDRSFSDPQSSTD. Positions 350–365 are enriched in low complexity; sequence AEGSESVEVEGVVVSA. Residues 366-379 show a composition bias toward basic and acidic residues; the sequence is EKIDLSPESSDRSF. Position 371 is a phosphoserine (S371). Residues K404 and K415 each participate in a glycyl lysine isopeptide (Lys-Gly) (interchain with G-Cter in SUMO2) cross-link. A disordered region spans residues 447–474; it reads LLSPEAGPAGGPSSAPGSHVENPFSEPA. A compositionally biased stretch (low complexity) spans 449 to 464; it reads SPEAGPAGGPSSAPGS. K541 is covalently cross-linked (Glycyl lysine isopeptide (Lys-Gly) (interchain with G-Cter in SUMO2)). Residues 552 to 576 show a composition bias toward polar residues; the sequence is QIPENSTSSQLMMNGATSSFENGHP. Positions 552 to 585 are disordered; sequence QIPENSTSSQLMMNGATSSFENGHPSQPGPPQLT. Glycyl lysine isopeptide (Lys-Gly) (interchain with G-Cter in SUMO2) cross-links involve residues K594 and K597. The segment at 613 to 635 adopts a C2H2-type 1 zinc-finger fold; the sequence is YACKICCKTFLTLTDCKKHIRVH. The C2H2-type 2; atypical zinc-finger motif lies at 641-664; that stretch reads YACLKCGKRFSQSSHLYKHSKTTC. Residues K645 and K658 each participate in a glycyl lysine isopeptide (Lys-Gly) (interchain with G-Cter in SUMO2) cross-link.

It localises to the nucleus. May be involved in transcriptional regulation. The protein is Zinc finger and BTB domain-containing protein 5 (ZBTB5) of Homo sapiens (Human).